Here is a 767-residue protein sequence, read N- to C-terminus: Cilia- and flagella-associated protein 91 (767 aa).

The segment at 1-29 (MSHAVTIEEPQAQPQVSQTRYRERSRAGS) is disordered.

This sequence belongs to the CFAP91 family. As to quaternary structure, interacts with MYCBP and AKAP1. Part of a complex containing MYCBP, AKAP1 and PRKAR2B. Interacts with CFAP61. In terms of assembly, does not interact with MYCBP. Post-translationally, phosphorylated by PKA. In terms of tissue distribution, strongly expressed in the liver. Widely expressed, but strongly expressed in all spermatogenesis-related tissues, including the testis, the epithelium of cauda and the corpus epididymis, as well as the spermatid and mature sperm. Also expressed in Leydig cells.

The protein resides in the mitochondrion. The protein localises to the cytoplasm. Its subcellular location is the cytoskeleton. It localises to the cilium axoneme. Involved in sperm flagellum axonemal organization and function. May regulate cilium motility through its role in the assembly of the axonemal radial spokes. This Homo sapiens (Human) protein is Cilia- and flagella-associated protein 91.